The primary structure comprises 155 residues: 6,7-dimethyl-8-ribityllumazine synthase (155 aa).

Residues F24, 58–60, and 82–84 contribute to the 5-amino-6-(D-ribitylamino)uracil site; these read AFE and VII. 87-88 provides a ligand contact to (2S)-2-hydroxy-3-oxobutyl phosphate; the sequence is ST. Catalysis depends on H90, which acts as the Proton donor. Position 115 (F115) interacts with 5-amino-6-(D-ribitylamino)uracil. Residue R129 coordinates (2S)-2-hydroxy-3-oxobutyl phosphate.

It belongs to the DMRL synthase family.

The enzyme catalyses (2S)-2-hydroxy-3-oxobutyl phosphate + 5-amino-6-(D-ribitylamino)uracil = 6,7-dimethyl-8-(1-D-ribityl)lumazine + phosphate + 2 H2O + H(+). It participates in cofactor biosynthesis; riboflavin biosynthesis; riboflavin from 2-hydroxy-3-oxobutyl phosphate and 5-amino-6-(D-ribitylamino)uracil: step 1/2. Its function is as follows. Catalyzes the formation of 6,7-dimethyl-8-ribityllumazine by condensation of 5-amino-6-(D-ribitylamino)uracil with 3,4-dihydroxy-2-butanone 4-phosphate. This is the penultimate step in the biosynthesis of riboflavin. The polypeptide is 6,7-dimethyl-8-ribityllumazine synthase (Chlorobium chlorochromatii (strain CaD3)).